Here is a 505-residue protein sequence, read N- to C-terminus: Maturase K (505 aa).

This sequence belongs to the intron maturase 2 family. MatK subfamily.

The protein resides in the plastid. Its subcellular location is the chloroplast. Usually encoded in the trnK tRNA gene intron. Probably assists in splicing its own and other chloroplast group II introns. This chain is Maturase K, found in Phaulothamnus spinescens (Snake-eyes).